The chain runs to 504 residues: Porphyrin biosynthesis protein HemD (504 aa).

The tract at residues 1-248 is uroporphyrinogen-III C-methyltransferase; the sequence is MEHGFVALVG…LSEKFSWFMK (248 aa). Residues 249–504 form a uroporphyrinogen-III synthase region; the sequence is KPLFGTKILV…LEIGGGNIYD (256 aa).

This sequence in the N-terminal section; belongs to the precorrin methyltransferase family. It in the C-terminal section; belongs to the uroporphyrinogen-III synthase family.

It carries out the reaction uroporphyrinogen III + 2 S-adenosyl-L-methionine = precorrin-2 + 2 S-adenosyl-L-homocysteine + H(+). It catalyses the reaction hydroxymethylbilane = uroporphyrinogen III + H2O. It participates in cofactor biosynthesis; adenosylcobalamin biosynthesis; precorrin-2 from uroporphyrinogen III: step 1/1. The protein operates within porphyrin-containing compound metabolism; siroheme biosynthesis; precorrin-2 from uroporphyrinogen III: step 1/1. Its function is as follows. May catalyze sequential reactions to synthesize uroporphyrinogen III from hydroxymethylbilane (HMB) and then precorrin-2, which are intermediate compounds in both vitamin B12 and siroheme biosyntheses. The chain is Porphyrin biosynthesis protein HemD (hemD) from Ruminiclostridium josui (Clostridium josui).